The primary structure comprises 185 residues: Large ribosomal subunit protein uL5 (185 aa).

The protein belongs to the universal ribosomal protein uL5 family. Part of the 50S ribosomal subunit; part of the 5S rRNA/L5/L18/L25 subcomplex. Contacts the 5S rRNA and the P site tRNA. Forms a bridge to the 30S subunit in the 70S ribosome.

This is one of the proteins that bind and probably mediate the attachment of the 5S RNA into the large ribosomal subunit, where it forms part of the central protuberance. In the 70S ribosome it contacts protein S13 of the 30S subunit (bridge B1b), connecting the 2 subunits; this bridge is implicated in subunit movement. Contacts the P site tRNA; the 5S rRNA and some of its associated proteins might help stabilize positioning of ribosome-bound tRNAs. This Rhodopseudomonas palustris (strain HaA2) protein is Large ribosomal subunit protein uL5.